Here is a 66-residue protein sequence, read N- to C-terminus: Beta-defensin 13 (66 aa).

The N-terminal stretch at 1-22 (MRIFSLIVAGLVLLIQLHPAKG) is a signal peptide. Disulfide bonds link cysteine 30–cysteine 59, cysteine 37–cysteine 51, and cysteine 41–cysteine 60.

It belongs to the beta-defensin family.

The protein resides in the secreted. In terms of biological role, has antibacterial activity. The polypeptide is Beta-defensin 13 (Defb13) (Rattus norvegicus (Rat)).